Reading from the N-terminus, the 521-residue chain is Bifunctional purine biosynthesis protein PurH (521 aa).

One can recognise an MGS-like domain in the interval 1 to 147 (MAVIKRALIS…KNNRDVTVVV (147 aa)).

Belongs to the PurH family.

The enzyme catalyses (6R)-10-formyltetrahydrofolate + 5-amino-1-(5-phospho-beta-D-ribosyl)imidazole-4-carboxamide = 5-formamido-1-(5-phospho-D-ribosyl)imidazole-4-carboxamide + (6S)-5,6,7,8-tetrahydrofolate. The catalysed reaction is IMP + H2O = 5-formamido-1-(5-phospho-D-ribosyl)imidazole-4-carboxamide. It participates in purine metabolism; IMP biosynthesis via de novo pathway; 5-formamido-1-(5-phospho-D-ribosyl)imidazole-4-carboxamide from 5-amino-1-(5-phospho-D-ribosyl)imidazole-4-carboxamide (10-formyl THF route): step 1/1. Its pathway is purine metabolism; IMP biosynthesis via de novo pathway; IMP from 5-formamido-1-(5-phospho-D-ribosyl)imidazole-4-carboxamide: step 1/1. The protein is Bifunctional purine biosynthesis protein PurH of Syntrophotalea carbinolica (strain DSM 2380 / NBRC 103641 / GraBd1) (Pelobacter carbinolicus).